The primary structure comprises 103 residues: Histone H4, minor (103 aa).

Residues 1-12 (MAGGKGGKGMGK) are compositionally biased toward gly residues. The tract at residues 1-29 (MAGGKGGKGMGKVGAKRHSRKSNKASIEG) is disordered. Residues Lys-5, Lys-8, Lys-12, and Lys-16 each carry the N6-acetyllysine modification. Residues 14–23 (GAKRHSRKSN) show a composition bias toward basic residues. A DNA-binding region spans residues 16–21 (KRHSRK).

It belongs to the histone H4 family. In terms of assembly, the nucleosome is a histone octamer containing two molecules each of H2A, H2B, H3 and H4 assembled in one H3-H4 heterotetramer and two H2A-H2B heterodimers. The octamer wraps approximately 147 bp of DNA.

It localises to the nucleus. The protein resides in the chromosome. Functionally, core component of nucleosome. Nucleosomes wrap and compact DNA into chromatin, limiting DNA accessibility to the cellular machineries which require DNA as a template. Histones thereby play a central role in transcription regulation, DNA repair, DNA replication and chromosomal stability. DNA accessibility is regulated via a complex set of post-translational modifications of histones, also called histone code, and nucleosome remodeling. The polypeptide is Histone H4, minor (Tetrahymena pyriformis).